The sequence spans 155 residues: Small ribosomal subunit protein uS7 (155 aa).

Belongs to the universal ribosomal protein uS7 family. Part of the 30S ribosomal subunit. Contacts proteins S9 and S11.

Functionally, one of the primary rRNA binding proteins, it binds directly to 16S rRNA where it nucleates assembly of the head domain of the 30S subunit. Is located at the subunit interface close to the decoding center, probably blocks exit of the E-site tRNA. The chain is Small ribosomal subunit protein uS7 from Mycoplasmoides gallisepticum (strain R(low / passage 15 / clone 2)) (Mycoplasma gallisepticum).